Reading from the N-terminus, the 552-residue chain is Urocanate hydratase (552 aa).

Residues glycine 49 to glycine 50, glutamine 127, glycine 173 to glycine 175, aspartate 193, asparagine 239 to alanine 240, glutamine 260 to histidine 264, tyrosine 270 to isoleucine 271, and tyrosine 319 each bind NAD(+). Cysteine 407 is a catalytic residue. Residue glycine 489 participates in NAD(+) binding.

The protein belongs to the urocanase family. Requires NAD(+) as cofactor.

It is found in the cytoplasm. The enzyme catalyses 4-imidazolone-5-propanoate = trans-urocanate + H2O. It participates in amino-acid degradation; L-histidine degradation into L-glutamate; N-formimidoyl-L-glutamate from L-histidine: step 2/3. Catalyzes the conversion of urocanate to 4-imidazolone-5-propionate. The sequence is that of Urocanate hydratase from Bacillus cereus (strain 03BB102).